The chain runs to 147 residues: HTH-type transcriptional regulator HmrR (147 aa).

The HTH merR-type domain maps to 1–69; the sequence is MNIGEASKVS…VEQIKELLAL (69 aa). A DNA-binding region (H-T-H motif) is located at residues 4–23; that stretch reads GEASKVSGVSSKMIRYYEQI.

In terms of assembly, homodimer.

The protein localises to the cytoplasm. Functionally, regulates the transcription of actP. It detects cytoplasmic copper stress and activates transcription in response to increasing copper concentrations. In the absence of copper, it negatively regulates the transcription of actP. The chain is HTH-type transcriptional regulator HmrR (hmrR) from Sinorhizobium medicae (strain WSM419) (Ensifer medicae).